The following is a 398-amino-acid chain: Signal-regulatory protein beta-1 isoform 3 (398 aa).

A signal peptide spans 1 to 29; sequence MPVPASWPHLPSPFLLMTLLLGRLTGVAG. The Extracellular segment spans residues 30 to 371; sequence EEELQVIQPD…GPALASAAPL (342 aa). Residues 31–136 enclose the Ig-like V-type domain; the sequence is EELQVIQPDK…SPDHVEFKSG (106 aa). Cystine bridges form between Cys54-Cys120 and Cys169-Cys227. 2 consecutive Ig-like C1-type domains span residues 147–246 and 253–347; these read PSAP…ANLS and PTLE…HDLK. N-linked (GlcNAc...) asparagine glycans are attached at residues Asn244, Asn291, and Asn318. Cys272 and Cys330 are disulfide-bonded. Basic and acidic residues predominate over residues 337–354; it reads QPAVSKSHDLKVSAHPKE. A disordered region spans residues 337–361; it reads QPAVSKSHDLKVSAHPKEQGSNTAP. The helical transmembrane segment at 372-392 threads the bilayer; that stretch reads LIAFLLGPKVLLVVGVSVIYV. At 393-398 the chain is on the cytoplasmic side; sequence YWKQKA.

The protein resides in the membrane. Functionally, immunoglobulin-like cell surface receptor involved in the negative regulation of receptor tyrosine kinase-coupled signaling processes. This is Signal-regulatory protein beta-1 isoform 3 (SIRPB1) from Homo sapiens (Human).